We begin with the raw amino-acid sequence, 278 residues long: Energy-coupling factor transporter ATP-binding protein EcfA (278 aa).

In terms of domain architecture, ABC transporter spans 5–240 (LETKNLVYNY…KEVIDEADLR (236 aa)). 38-45 (GHNGAGKS) lines the ATP pocket.

It belongs to the ABC transporter superfamily. Energy-coupling factor EcfA family. As to quaternary structure, forms a stable energy-coupling factor (ECF) transporter complex composed of 2 membrane-embedded substrate-binding proteins (S component), 2 ATP-binding proteins (A component) and 2 transmembrane proteins (T component).

Its subcellular location is the cell membrane. ATP-binding (A) component of a common energy-coupling factor (ECF) ABC-transporter complex. Unlike classic ABC transporters this ECF transporter provides the energy necessary to transport a number of different substrates. The polypeptide is Energy-coupling factor transporter ATP-binding protein EcfA (Methanosphaera stadtmanae (strain ATCC 43021 / DSM 3091 / JCM 11832 / MCB-3)).